The following is a 180-amino-acid chain: Signaling threshold-regulating transmembrane adapter 1 (180 aa).

Residues 1–24 (MSRDYNCTTDDQLAWGIPSISHAW) lie on the Extracellular side of the membrane. The N-linked (GlcNAc...) asparagine glycan is linked to Asn-6. The chain crosses the membrane as a helical; Signal-anchor for type III membrane protein span at residues 25–45 (GLWALLGVVTVLLLISLAALL). Residues 46-180 (SQWTRGRRRN…AYANSQPAPS (135 aa)) are Cytoplasmic-facing. Phosphoserine occurs at positions 63 and 66. Tyr-73 is subject to Phosphotyrosine. The tract at residues 73 to 76 (YGNL) is interaction with GRB2. The interval 81 to 103 (TGRLSQEPRSEEQDPPSSGGLAR) is disordered. A phosphoserine mark is found at Ser-85 and Ser-90. Tyr-111, Tyr-132, and Tyr-153 each carry phosphotyrosine. The interval 130–135 (IKYCEV) is interaction with PTPN11. The interaction with CSK stretch occupies residues 153 to 156 (YASV). The residue at position 166 (Ser-166) is a Phosphoserine. A Phosphotyrosine modification is found at Tyr-172. The tract at residues 172-175 (YANS) is interaction with GRB2.

In terms of assembly, homodimer; disulfide-linked. When phosphorylated, interacts with PTPN11/SHP2, GRB2 and CSK. Phosphorylated on tyrosines upon TCR activation; which leads to the recruitment of PTPN11, GRB2 and CSK. Expressed in thymus and spleen, with highest levels in immature thymocytes (at protein level).

The protein resides in the cell membrane. Its function is as follows. Negatively regulates T-cell antigen receptor (TCR)-mediated signaling. Involved in positive selection of T-cells. The protein is Signaling threshold-regulating transmembrane adapter 1 (Sit1) of Mus musculus (Mouse).